A 356-amino-acid polypeptide reads, in one-letter code: Pavine N-methyltransferase (356 aa).

Residues Phe-96, Ser-97, Gly-135, Asn-159, Gln-163, Asp-185, Val-186, and Val-201 each contribute to the S-adenosyl-L-homocysteine site. Positions 96, 97, 135, 159, 163, 185, 186, and 201 each coordinate S-adenosyl-L-methionine. Residue Glu-205 participates in (S)-tetrahydropapaverine binding. Cys-331 is a catalytic residue.

It belongs to the CFA/CMAS family. As to quaternary structure, homodimer.

It localises to the cytoplasm. The catalysed reaction is (+-)-pavine + S-adenosyl-L-methionine = N-methylpavine + S-adenosyl-L-homocysteine + H(+). The enzyme catalyses (S)-reticuline + S-adenosyl-L-methionine = (S)-tembetarine + S-adenosyl-L-homocysteine + H(+). It carries out the reaction (S)-stylopine + S-adenosyl-L-methionine = (S)-cis-N-methylstylopine + S-adenosyl-L-homocysteine. It catalyses the reaction (S)-scoulerine + S-adenosyl-L-methionine = (S)-cis-N-methylscoulerine + S-adenosyl-L-homocysteine. The catalysed reaction is (S)-tetrahydropapaverine + S-adenosyl-L-methionine = (S)-N-methyltetrahydropapaverine + S-adenosyl-L-homocysteine + H(+). The enzyme catalyses (S)-tetrahydropalmatine + S-adenosyl-L-methionine = (S)-cis-N-methyltetrahydropalmatine + S-adenosyl-L-homocysteine. It participates in alkaloid biosynthesis. In the presence of a racemic mixture of tetrahydropapaverine (THP), one molecule of (S)-THP binds in a productive mode, while one molecule of (R)-THP is bound next to it in a non-productive mode. The (R)-THP seems to inhibit the release of products from the enzyme when higher concentrations of the racemic substrate are added to the reaction. Functionally, N-methyltransferase with a substrate preference for (+-)-pavine and (S)-reticuline, but also active with the protoberberines scoulerine and stylopine and, to a lesser extent, tetrahydropapaverine (THP) and tetrahydropalmatine. Is not active on (R)-reticuline, cryptopine, glaucine, codeine, canadaline, noscapine and berbamine. This Thalictrum flavum subsp. glaucum (Yellow meadow rue) protein is Pavine N-methyltransferase.